A 246-amino-acid polypeptide reads, in one-letter code: Large ribosomal subunit protein uL3 (246 aa).

Residue Gln151 is modified to N5-methylglutamine.

Belongs to the universal ribosomal protein uL3 family. As to quaternary structure, part of the 50S ribosomal subunit. Forms a cluster with proteins L14 and L19. Methylated by PrmB.

One of the primary rRNA binding proteins, it binds directly near the 3'-end of the 23S rRNA, where it nucleates assembly of the 50S subunit. The sequence is that of Large ribosomal subunit protein uL3 from Bartonella henselae (strain ATCC 49882 / DSM 28221 / CCUG 30454 / Houston 1) (Rochalimaea henselae).